The following is a 239-amino-acid chain: MSGGYDLNLFASPPDCKFLCSVCHGVLKRPTRLPCSHIFCKKCIFRWLARQNTCPCCRKEVTRRKMVEVNKLRKTIGRLQVKCKNAAAGCLDTHPLAHRKEHQDSCPFELMACPNEGCTVQVLRGVLDEHRQHCQQNGQQRCPLGCGSTLAALEGEHHNCYRELRDAWVQRHERNRTLLLGLLGRVRRVHLTTSIIHQQLAQLSNFLEDDDNLLLNAQVQETEVTPEAEMRGTQGQSVL.

The RING-type zinc-finger motif lies at 20-58; it reads CSVCHGVLKRPTRLPCSHIFCKKCIFRWLARQNTCPCCR. The TRAF-type zinc finger occupies 101–156; that stretch reads EHQDSCPFELMACPNEGCTVQVLRGVLDEHRQHCQQNGQQRCPLGCGSTLAALEGE.

As to quaternary structure, interacts with DTNBP1. Expressed in testis. Expressed in round spermatids of the stages VII-VIII semniniferous tubules. Expressed in elongating spermatids of stages VIII-IX seminiferous tubules (at protein level).

The protein resides in the cytoplasm. Its subcellular location is the nucleus. May be involved in acrosome formation of spermatids. This chain is RING finger protein 151 (Rnf151), found in Mus musculus (Mouse).